Consider the following 106-residue polypeptide: MRRDIVVNQQFTSKVKSIGINSHGAILSSANEPKKLPNKKLVSTKSHTQVNREKSKNKDTYEDYSDSNNSHITYGLPNYFVKKNRLSVDNDMVESNNNEFDYISDD.

The segment at 28–68 (SSANEPKKLPNKKLVSTKSHTQVNREKSKNKDTYEDYSDSN) is disordered. Basic and acidic residues predominate over residues 50-61 (VNREKSKNKDTY).

This is an uncharacterized protein from Acanthamoeba polyphaga (Amoeba).